The sequence spans 670 residues: DNA ligase (670 aa).

Residues 32-36, 81-82, and Glu-111 each bind NAD(+); these read DAEYD and SL. The active-site N6-AMP-lysine intermediate is Lys-113. 4 residues coordinate NAD(+): Arg-134, Glu-171, Lys-290, and Lys-314. Zn(2+)-binding residues include Cys-408, Cys-411, Cys-426, and Cys-432. The BRCT domain occupies 591–670; it reads EEALSLKGQT…DGLLAVLAGE (80 aa).

The protein belongs to the NAD-dependent DNA ligase family. LigA subfamily. It depends on Mg(2+) as a cofactor. Mn(2+) serves as cofactor.

The catalysed reaction is NAD(+) + (deoxyribonucleotide)n-3'-hydroxyl + 5'-phospho-(deoxyribonucleotide)m = (deoxyribonucleotide)n+m + AMP + beta-nicotinamide D-nucleotide.. In terms of biological role, DNA ligase that catalyzes the formation of phosphodiester linkages between 5'-phosphoryl and 3'-hydroxyl groups in double-stranded DNA using NAD as a coenzyme and as the energy source for the reaction. It is essential for DNA replication and repair of damaged DNA. The sequence is that of DNA ligase from Shewanella sediminis (strain HAW-EB3).